We begin with the raw amino-acid sequence, 231 residues long: uncharacterized protein (231 aa).

4 helical membrane passes run 39 to 59, 70 to 90, 156 to 176, and 189 to 206; these read FCISVISFFLLAIITLTYGPF, ALSLYFINVIMGVTYLSVPVI, AIISILCLSYSAICIVNGGSI, and IVAIMFFILYTSLMNMFF.

It belongs to the FliR/MopE/SpaR family.

The protein resides in the cell membrane. This is an uncharacterized protein from Escherichia coli (strain K12).